We begin with the raw amino-acid sequence, 568 residues long: MAGUK p55 subfamily member 3 (568 aa).

L27 domains are found at residues 6 to 60 (EDSG…ERQS) and 61 to 118 (PTPV…FDPV). Positions 137–218 (IVRLVKNKEP…SITLKIIPAT (82 aa)) constitute a PDZ domain. The region spanning 226–296 (DSKVFMRALF…PSKQFQERRL (71 aa)) is the SH3 domain. Residue S307 is modified to Phosphoserine. The Guanylate kinase-like domain maps to 385–568 (PRLVVLIGSL…QEPAASSELS (184 aa)).

It belongs to the MAGUK family. As to quaternary structure, interacts with HTR2C; this interaction stabilizes the receptor at the plasma membrane and prevents the desensitization of the HTR2C receptor-mediated calcium response. Interacts with HTR2A. Interacts with HTR4. Interacts (via PDZ domain) with CADM1 (via C-terminus)Interacts (via PDZ domain) with CADM1; this interaction connects CADM1 with DLG1. Interacts (via Guanylate kinase-like domain) with PALS1. Interacts with DLG1 (via N-terminus); this interaction connects CADM1 with DLG1 and links CADM1 with the regulatory subunit of phosphoinositide-3-kinase (PI3K) by forming a multiprotein complex and participates in cell spreading. In terms of tissue distribution, expressed in brain, skeletal muscle, testis, kidney, and lung.

The protein localises to the apical cell membrane. It is found in the cell membrane. The protein resides in the cell junction. Its subcellular location is the adherens junction. In terms of biological role, participates in cell spreading through the phosphoinositide-3-kinase (PI3K) pathway by connecting CADM1 to DLG1 and the regulatory subunit of phosphoinositide-3-kinase (PI3K). Stabilizes HTR2C at the plasma membrane and prevents its desensitization. May participates in the maintenance of adherens junctions. The chain is MAGUK p55 subfamily member 3 from Mus musculus (Mouse).